The primary structure comprises 364 residues: Uroporphyrinogen decarboxylase (364 aa).

The coproporphyrinogen I site is built by R34, A36, R38, R47, D83, Y161, S216, and H336. Coproporphyrinogen III is bound by residues R34, A36, and R38. Coproporphyrinogen III-binding residues include D83, Y161, S216, and H336.

The protein belongs to the uroporphyrinogen decarboxylase family. Homodimer.

The protein localises to the cytoplasm. It localises to the cytosol. The enzyme catalyses uroporphyrinogen III + 4 H(+) = coproporphyrinogen III + 4 CO2. The catalysed reaction is uroporphyrinogen I + 4 H(+) = coproporphyrinogen I + 4 CO2. It functions in the pathway porphyrin-containing compound metabolism; protoporphyrin-IX biosynthesis; coproporphyrinogen-III from 5-aminolevulinate: step 4/4. In terms of biological role, catalyzes the sequential decarboxylation of the four acetate side chains of uroporphyrinogen to form coproporphyrinogen and participates in the fifth step in the heme biosynthetic pathway. Isomer I or isomer III of uroporphyrinogen may serve as substrate, but only coproporphyrinogen III can ultimately be converted to heme. In vitro also decarboxylates pentacarboxylate porphyrinogen I. The sequence is that of Uroporphyrinogen decarboxylase from Rattus norvegicus (Rat).